The sequence spans 166 residues: Large ribosomal subunit protein uL10 (166 aa).

The protein belongs to the universal ribosomal protein uL10 family. In terms of assembly, part of the ribosomal stalk of the 50S ribosomal subunit. The N-terminus interacts with L11 and the large rRNA to form the base of the stalk. The C-terminus forms an elongated spine to which L12 dimers bind in a sequential fashion forming a multimeric L10(L12)X complex.

Its function is as follows. Forms part of the ribosomal stalk, playing a central role in the interaction of the ribosome with GTP-bound translation factors. The polypeptide is Large ribosomal subunit protein uL10 (Bacillus cereus (strain ATCC 14579 / DSM 31 / CCUG 7414 / JCM 2152 / NBRC 15305 / NCIMB 9373 / NCTC 2599 / NRRL B-3711)).